The chain runs to 260 residues: DNA repair protein RecO (260 aa).

Belongs to the RecO family.

Functionally, involved in DNA repair and RecF pathway recombination. The sequence is that of DNA repair protein RecO from Streptococcus suis (strain 98HAH33).